Consider the following 97-residue polypeptide: Bacterial microcompartment shell protein EutM (97 aa).

One can recognise a BMC domain in the interval 3–87 (ALGMIETRGL…PHGDLEEVFP (85 aa)).

Belongs to the bacterial microcompartments protein family. Homohexamer with a central pore of up to 8.6 Angstroms diameter. The hexamers pack into a two-dimensional array. Interacts with EutQ.

It is found in the bacterial microcompartment. Its pathway is amine and polyamine degradation; ethanolamine degradation. Functionally, probably a major component of the bacterial microcompartment (BMC) shell dedicated to ethanolamine degradation. Each homohexamer has a central pore with an opening of up to 8.6 Angstroms. A positively-charged funnel leads to the pore from each side of the hexamer. The pore probably allows metabolite passage into and out of the BMC. The sequence is that of Bacterial microcompartment shell protein EutM (eutM) from Escherichia coli O6:H1 (strain CFT073 / ATCC 700928 / UPEC).